Here is a 531-residue protein sequence, read N- to C-terminus: DNA damage-binding protein cmr1 (531 aa).

Disordered regions lie at residues 37-83 (GIFP…RGIA) and 218-264 (DASQ…MHIH). Over residues 53-64 (KPKKKPAPKKIK) the composition is skewed to basic residues. The WD 1 repeat unit spans residues 186-227 (VTPERIYTMTFHPSEAKPLIFAGDKMGNLGVLDASQERPVSS). Positions 233–245 (GDEEEQEDDDDPD) are enriched in acidic residues. 6 WD repeats span residues 253 to 293 (PHTR…SVET), 300 to 340 (SDDV…RTAV), 345 to 385 (LSEK…HDDP), 392 to 431 (LSRLSVSHAAFNSAGQVATSSYDDSLKIYDFGAKGIASWE), 454 to 497 (GRWV…LAQL), and 500 to 531 (DGITAVPAVAVFHRSKNWIAGGTASGKICLWM).

This sequence belongs to the WD repeat DDB2/WDR76 family.

In terms of biological role, DNA-binding protein that binds to both single- and double-stranded DNA. Binds preferentially to UV-damaged DNA. May be involved in DNA-metabolic processes. The chain is DNA damage-binding protein cmr1 from Aspergillus clavatus (strain ATCC 1007 / CBS 513.65 / DSM 816 / NCTC 3887 / NRRL 1 / QM 1276 / 107).